A 358-amino-acid polypeptide reads, in one-letter code: Fructose-bisphosphate aldolase 6, cytosolic (358 aa).

An N-acetylserine modification is found at Ser2. Arg39 serves as a coordination point for substrate. An S-glutathionyl cysteine; transient modification is found at Cys68. S-glutathionyl cysteine; transient; alternate is present on Cys173. Cys173 carries the post-translational modification S-nitrosocysteine; transient; alternate. The active-site Proton acceptor is the Glu183. Residue Lys225 is the Schiff-base intermediate with dihydroxyacetone-P of the active site. Residues 266-268 (SGG) and Arg298 each bind substrate. Ser350 is modified (phosphoserine). The residue at position 354 (Lys354) is an N6,N6,N6-trimethyllysine.

The protein belongs to the class I fructose-bisphosphate aldolase family. Homotetramer. Interacts with TRX1 and TRX3. Interacts with GAPC1 and VDAC3. In terms of processing, S-glutathionylated at Cys-68 and Cys-173. Post-translationally, S-nitrosylated at Cys-173. In terms of tissue distribution, expressed in roots, rosettes leaves, cauline leaves, stems and flowers.

It is found in the cytoplasm. Its subcellular location is the cytosol. The protein resides in the nucleus. The protein localises to the mitochondrion. It carries out the reaction beta-D-fructose 1,6-bisphosphate = D-glyceraldehyde 3-phosphate + dihydroxyacetone phosphate. Its pathway is carbohydrate degradation; glycolysis; D-glyceraldehyde 3-phosphate and glycerone phosphate from D-glucose: step 4/4. Total and irreversible inhibition by S-nitrosoglutathione (GSNO). Partial and reversible inhibition by oxidized glutathione (GSSG). Functionally, fructose-bisphosphate aldolase that plays a key role in glycolysis and gluconeogenesis. Associates with GAPC1 to the outer mitochondrial membrane, in a redox-dependent manner, leading to binding and bundling of actin. Actin binding and bundling occurs under oxidizing conditions and is reversible under reducing conditions. May be part of a redox-dependent retrograde signal transduction network for adaptation upon oxidative stress. This is Fructose-bisphosphate aldolase 6, cytosolic from Arabidopsis thaliana (Mouse-ear cress).